A 245-amino-acid polypeptide reads, in one-letter code: Transmembrane and ubiquitin-like domain-containing protein 1 (245 aa).

The segment at 2-30 (ALIEGVGDEVTVLFAVLACLLVLALAWVS) is required to release iHOPS from membranes. A helical membrane pass occupies residues 11-31 (VTVLFAVLACLLVLALAWVST). A disordered region spans residues 33–100 (TTESTDPQPQ…ASTPPDSPQE (68 aa)). Phosphoserine is present on residues serine 73, serine 97, and serine 126. The region spanning 102 to 175 (LLLRLKFLND…LHCHVSTRVG (74 aa)) is the Ubiquitin-like domain. Transmembrane regions (helical) follow at residues 194 to 214 (IGSLLLPLLLLLLLLLWYCQI) and 219 to 239 (FFPLTATLGLAGFTLLLSLLA).

Interacts with EEF1A1, CAMLG, GRIA2 and GRIP1. Interacts with NPM1 and CDKN2A; TMUB1 can enhance interaction between NPM1 and CDKN2A and is proposed to bridge the proteins; proposed to be mediated by iHOPS. Interacts with TUBG1. Interacts with ERLIN2 and AMFR; TMUB1 promotes the interaction of ERLIN2 with AMFR. Post-translationally, isoform 1 (lHOPS) is processed by regulated intramembrane proteolysis (RIP) in the N-terminus to release iHOPS from membranes. In terms of processing, isoform 2 seems to undergo a selective cleavage in the C-terminal region to release an additional cytoplasmic form. As to expression, expressed in adult brain; at protein level. Isoform 1 (lHOPS) is highly expressed in small intestine, stomach and epididymis. Isoform 2 (sHOPS) and iHOPS are abundantly expressed in brain, liver and adrenal gland.

It is found in the membrane. The protein resides in the postsynaptic cell membrane. Its subcellular location is the recycling endosome. It localises to the cytoplasm. The protein localises to the nucleus. It is found in the nucleolus. The protein resides in the cytoskeleton. Its subcellular location is the microtubule organizing center. It localises to the centrosome. Involved in sterol-regulated ubiquitination and degradation of HMG-CoA reductase HMGCR. Involved in positive regulation of AMPA-selective glutamate receptor GRIA2 recycling to the cell surface. Acts as a negative regulator of hepatocyte growth during regeneration. In terms of biological role, may contribute to the regulation of translation during cell-cycle progression. May contribute to the regulation of cell proliferation. May be involved in centrosome assembly. Modulates stabilization and nucleolar localization of tumor suppressor CDKN2A and enhances association between CDKN2A and NPM1. The sequence is that of Transmembrane and ubiquitin-like domain-containing protein 1 (Tmub1) from Mus musculus (Mouse).